A 225-amino-acid chain; its full sequence is Enolase-phosphatase E1 (225 aa).

It belongs to the HAD-like hydrolase superfamily. MasA/MtnC family. As to quaternary structure, monomer. Requires Mg(2+) as cofactor.

It carries out the reaction 5-methylsulfanyl-2,3-dioxopentyl phosphate + H2O = 1,2-dihydroxy-5-(methylsulfanyl)pent-1-en-3-one + phosphate. It participates in amino-acid biosynthesis; L-methionine biosynthesis via salvage pathway; L-methionine from S-methyl-5-thio-alpha-D-ribose 1-phosphate: step 3/6. It functions in the pathway amino-acid biosynthesis; L-methionine biosynthesis via salvage pathway; L-methionine from S-methyl-5-thio-alpha-D-ribose 1-phosphate: step 4/6. Bifunctional enzyme that catalyzes the enolization of 2,3-diketo-5-methylthiopentyl-1-phosphate (DK-MTP-1-P) into the intermediate 2-hydroxy-3-keto-5-methylthiopentenyl-1-phosphate (HK-MTPenyl-1-P), which is then dephosphorylated to form the acireductone 1,2-dihydroxy-3-keto-5-methylthiopentene (DHK-MTPene). In Pseudomonas aeruginosa (strain UCBPP-PA14), this protein is Enolase-phosphatase E1.